Here is a 321-residue protein sequence, read N- to C-terminus: MAVYTDINEVDLKDFLAHYDTGELLSFKGIAEGVENSNFLLHTTKGALILTLYEKRVEKDDLPFFLGLMHHLSAKGLNCPLPLPRKDGALLGELSGRPAALISFLEGMWLRKPETQHCRAVGEALATMHLAAEGFALRRDNALDLAGWQALWPKARARADEVSPGLKAEIDAELVHLAGQWPKDLPAGVIHADLFPDNVFFLGDQLSGLIDFYFACNDFLAYDLSICLNAWCFEKDGSYNITKGKAMIDGYLAVRSLSPAEVAAMPVLCRGSALRFLLTRLYDWLTTPEGAMVVKKEPLEYLRKLRFHQAVETAAEYGWPQ.

This sequence belongs to the pseudomonas-type ThrB family.

The catalysed reaction is L-homoserine + ATP = O-phospho-L-homoserine + ADP + H(+). The protein operates within amino-acid biosynthesis; L-threonine biosynthesis; L-threonine from L-aspartate: step 4/5. In Allorhizobium ampelinum (strain ATCC BAA-846 / DSM 112012 / S4) (Agrobacterium vitis (strain S4)), this protein is Homoserine kinase.